We begin with the raw amino-acid sequence, 153 residues long: Pheromone-binding protein Gp-9 (153 aa).

The N-terminal stretch at 1–19 (MKTFVLHIFIFALVAFASA) is a signal peptide. 3 cysteine pairs are disulfide-bonded: Cys-37-Cys-77, Cys-73-Cys-129, and Cys-118-Cys-138.

The protein belongs to the PBP/GOBP family. Homodimer.

It localises to the secreted. Functionally, colony queen number, a major feature of social organization, is associated with worker genotype for Gp-9. Colonies are headed by either a single reproductive queen (monogyne form) or multiple queens (polygyne form). Differences in worker Gp-9 genotypes between social forms may cause differences in workers' abilities to recognize queens and regulate their numbers. This Solenopsis richteri (Black imported fire ant) protein is Pheromone-binding protein Gp-9.